Reading from the N-terminus, the 160-residue chain is Nucleotide-binding protein CJA_2652 (160 aa).

This sequence belongs to the YajQ family.

Nucleotide-binding protein. The polypeptide is Nucleotide-binding protein CJA_2652 (Cellvibrio japonicus (strain Ueda107) (Pseudomonas fluorescens subsp. cellulosa)).